A 159-amino-acid polypeptide reads, in one-letter code: uncharacterized protein (159 aa).

Helical transmembrane passes span Ala76–Lys96, Ile104–Thr124, and Phe131–Gly151.

It is found in the membrane. This is an uncharacterized protein from Acanthamoeba polyphaga (Amoeba).